A 65-amino-acid polypeptide reads, in one-letter code: Large ribosomal subunit protein uL29 (65 aa).

This sequence belongs to the universal ribosomal protein uL29 family.

The protein is Large ribosomal subunit protein uL29 of Leptothrix cholodnii (strain ATCC 51168 / LMG 8142 / SP-6) (Leptothrix discophora (strain SP-6)).